Here is a 346-residue protein sequence, read N- to C-terminus: UDP-3-O-acylglucosamine N-acyltransferase (346 aa).

The active-site Proton acceptor is histidine 253.

It belongs to the transferase hexapeptide repeat family. LpxD subfamily. In terms of assembly, homotrimer.

The catalysed reaction is a UDP-3-O-[(3R)-3-hydroxyacyl]-alpha-D-glucosamine + a (3R)-hydroxyacyl-[ACP] = a UDP-2-N,3-O-bis[(3R)-3-hydroxyacyl]-alpha-D-glucosamine + holo-[ACP] + H(+). Its pathway is bacterial outer membrane biogenesis; LPS lipid A biosynthesis. Its function is as follows. Catalyzes the N-acylation of UDP-3-O-acylglucosamine using 3-hydroxyacyl-ACP as the acyl donor. Is involved in the biosynthesis of lipid A, a phosphorylated glycolipid that anchors the lipopolysaccharide to the outer membrane of the cell. The sequence is that of UDP-3-O-acylglucosamine N-acyltransferase from Rickettsia typhi (strain ATCC VR-144 / Wilmington).